Consider the following 354-residue polypeptide: Serum paraoxonase/lactonase 3 (354 aa).

Cys-42 and Cys-352 are oxidised to a cystine. Asn-50 carries an N-linked (GlcNAc...) asparagine glycan. The Ca(2+) site is built by Glu-53 and Asp-54. The Proton acceptor role is filled by His-114. Residue Ile-116 coordinates Ca(2+). At Ser-165 the chain carries Phosphoserine. 5 residues coordinate Ca(2+): Asn-167, Asp-168, Asn-223, Asp-268, and Asn-269. N-linked (GlcNAc...) asparagine glycosylation is found at Asn-269 and Asn-323.

It belongs to the paraoxonase family. Homodimer. It depends on Ca(2+) as a cofactor. Glycosylated. In terms of processing, the signal sequence is not cleaved.

Its subcellular location is the secreted. The protein localises to the extracellular space. The catalysed reaction is a phenyl acetate + H2O = a phenol + acetate + H(+). It catalyses the reaction An aryl dialkyl phosphate + H2O = dialkyl phosphate + an aryl alcohol.. It carries out the reaction an N-acyl-L-homoserine lactone + H2O = an N-acyl-L-homoserine + H(+). In terms of biological role, has low activity towards the organophosphate paraxon and aromatic carboxylic acid esters. Rapidly hydrolyzes lactones such as statin prodrugs (e.g. lovastatin). Hydrolyzes aromatic lactones and 5- or 6-member ring lactones with aliphatic substituents but not simple lactones or those with polar substituents. This chain is Serum paraoxonase/lactonase 3 (Pon3), found in Rattus norvegicus (Rat).